A 75-amino-acid polypeptide reads, in one-letter code: U6-lycotoxin-Ls1d (75 aa).

The first 21 residues, 1–21 (MKLLLFTALVLVVISLVEVEA), serve as a signal peptide directing secretion. Residues 22-25 (ENER) constitute a propeptide that is removed on maturation.

The protein belongs to the neurotoxin 19 (CSTX) family. 06 (U6-Lctx) subfamily. In terms of processing, contains 4 disulfide bonds. Expressed by the venom gland.

The protein localises to the secreted. The protein is U6-lycotoxin-Ls1d of Lycosa singoriensis (Wolf spider).